A 230-amino-acid polypeptide reads, in one-letter code: Cytochrome c oxidase subunit 2 (230 aa).

The Mitochondrial intermembrane segment spans residues 1–14; it reads MAHPSQLGFQDAAS. Residues 15–45 traverse the membrane as a helical segment; the sequence is PVMEELLHFHDHALMIVLLISTLVLYIIVAM. The Mitochondrial matrix portion of the chain corresponds to 46 to 59; it reads VSTKLTNKYILDSQ. A helical membrane pass occupies residues 60 to 87; sequence EIEIVWTVLPAVILILIALPSLRILYLM. At 88 to 230 the chain is on the mitochondrial intermembrane side; that stretch reads DEINDPHLTI…KWSTMMLEDA (143 aa). His161, Cys196, Glu198, Cys200, His204, and Met207 together coordinate Cu cation. Residue Glu198 participates in Mg(2+) binding.

Belongs to the cytochrome c oxidase subunit 2 family. In terms of assembly, component of the cytochrome c oxidase (complex IV, CIV), a multisubunit enzyme composed of 14 subunits. The complex is composed of a catalytic core of 3 subunits MT-CO1, MT-CO2 and MT-CO3, encoded in the mitochondrial DNA, and 11 supernumerary subunits COX4I, COX5A, COX5B, COX6A, COX6B, COX6C, COX7A, COX7B, COX7C, COX8 and NDUFA4, which are encoded in the nuclear genome. The complex exists as a monomer or a dimer and forms supercomplexes (SCs) in the inner mitochondrial membrane with NADH-ubiquinone oxidoreductase (complex I, CI) and ubiquinol-cytochrome c oxidoreductase (cytochrome b-c1 complex, complex III, CIII), resulting in different assemblies (supercomplex SCI(1)III(2)IV(1) and megacomplex MCI(2)III(2)IV(2)). Found in a complex with TMEM177, COA6, COX18, COX20, SCO1 and SCO2. Interacts with TMEM177 in a COX20-dependent manner. Interacts with COX20. Interacts with COX16. It depends on Cu cation as a cofactor.

The protein localises to the mitochondrion inner membrane. It carries out the reaction 4 Fe(II)-[cytochrome c] + O2 + 8 H(+)(in) = 4 Fe(III)-[cytochrome c] + 2 H2O + 4 H(+)(out). Functionally, component of the cytochrome c oxidase, the last enzyme in the mitochondrial electron transport chain which drives oxidative phosphorylation. The respiratory chain contains 3 multisubunit complexes succinate dehydrogenase (complex II, CII), ubiquinol-cytochrome c oxidoreductase (cytochrome b-c1 complex, complex III, CIII) and cytochrome c oxidase (complex IV, CIV), that cooperate to transfer electrons derived from NADH and succinate to molecular oxygen, creating an electrochemical gradient over the inner membrane that drives transmembrane transport and the ATP synthase. Cytochrome c oxidase is the component of the respiratory chain that catalyzes the reduction of oxygen to water. Electrons originating from reduced cytochrome c in the intermembrane space (IMS) are transferred via the dinuclear copper A center (CU(A)) of subunit 2 and heme A of subunit 1 to the active site in subunit 1, a binuclear center (BNC) formed by heme A3 and copper B (CU(B)). The BNC reduces molecular oxygen to 2 water molecules using 4 electrons from cytochrome c in the IMS and 4 protons from the mitochondrial matrix. This chain is Cytochrome c oxidase subunit 2 (mt-co2), found in Salmo salar (Atlantic salmon).